A 285-amino-acid polypeptide reads, in one-letter code: Homeobox protein Hox-A13b (285 aa).

The segment at residues 219–278 is a DNA-binding region (homeobox); that stretch reads GRKKRVPYTKVQLKELEREYAANKFITKDKRRRISAQTNLTERQVTIWFQNRRVKEKKVV.

It belongs to the Abd-B homeobox family.

Its subcellular location is the nucleus. Its function is as follows. Sequence-specific transcription factor which is part of a developmental regulatory system that provides cells with specific positional identities on the anterior-posterior axis. This Takifugu rubripes (Japanese pufferfish) protein is Homeobox protein Hox-A13b (hoxa13b).